Here is a 364-residue protein sequence, read N- to C-terminus: Palmitoyltransferase ZDHHC9 (364 aa).

Residues M1–K35 lie on the Cytoplasmic side of the membrane. A helical membrane pass occupies residues G36–E56. At C57 to Q63 the chain is on the lumenal side. Residues L64–L84 traverse the membrane as a helical segment. The Cytoplasmic portion of the chain corresponds to R85–Y183. Positions K139–L189 constitute a DHHC domain. Residue C169 is the S-palmitoyl cysteine intermediate of the active site. The chain crosses the membrane as a helical span at residues F184–V204. The Lumenal portion of the chain corresponds to Y205–E228. The helical transmembrane segment at V229–L249 threads the bilayer. At V250–K364 the chain is on the cytoplasmic side. The tract at residues P303–K364 is disordered. Positions R310–E336 are enriched in polar residues. The segment covering E346–P356 has biased composition (pro residues).

Belongs to the DHHC palmitoyltransferase family. ERF2/ZDHHC9 subfamily. Interacts with GOLGA7.

The protein localises to the endoplasmic reticulum membrane. It localises to the golgi apparatus membrane. The catalysed reaction is L-cysteinyl-[protein] + hexadecanoyl-CoA = S-hexadecanoyl-L-cysteinyl-[protein] + CoA. In terms of biological role, palmitoyltransferase that catalyzes the addition of palmitate onto various protein substrates, such as ADRB2, GSDMD, HRAS, NRAS and CGAS. The ZDHHC9-GOLGA7 complex is a palmitoyltransferase specific for HRAS and NRAS. May have a palmitoyltransferase activity toward the beta-2 adrenergic receptor/ADRB2 and therefore regulate G protein-coupled receptor signaling. Acts as a regulator of innate immunity by catalyzing palmitoylation of CGAS, thereby promoting CGAS homodimerization and cyclic GMP-AMP synthase activity. Activates pyroptosis by catalyzing palmitoylation of gasdermin-D (GSDMD), thereby promoting membrane translocation and pore formation of GSDMD. This chain is Palmitoyltransferase ZDHHC9 (Zdhhc9), found in Mus musculus (Mouse).